An 871-amino-acid chain; its full sequence is Probable inorganic carbon transporter subunit DabA (871 aa).

C396, D398, H577, and C592 together coordinate Zn(2+).

The protein belongs to the inorganic carbon transporter (TC 9.A.2) DabA family. In terms of assembly, forms a complex with DabB. Requires Zn(2+) as cofactor.

It is found in the cell membrane. Functionally, part of an energy-coupled inorganic carbon pump. In Bacillus subtilis (strain 168), this protein is Probable inorganic carbon transporter subunit DabA.